Here is a 486-residue protein sequence, read N- to C-terminus: Transcriptional regulator ERG (486 aa).

A compositionally biased stretch (polar residues) spans 41-54; sequence TASSSSDYGQTSKM. 2 disordered regions span residues 41–62 and 79–99; these read TASSSSDYGQTSKMSPRVPQQD and PSQVNGSRNSPDECSVNKGGK. A phosphoserine mark is found at Ser55, Ser88, and Ser103. Residues 120-206 enclose the PNT domain; the sequence is VPPPNMTTNE…SHLHYLRETP (87 aa). Positions 249 to 311 are disordered; it reads QRITTRPDLP…ILGPTSSRLA (63 aa). The span at 271–284 shows a compositional bias: polar residues; that stretch reads SHLTPQSKAAQPSP. Lys289 participates in a covalent cross-link: Glycyl lysine isopeptide (Lys-Gly) (interchain with G-Cter in SUMO2). Positions 318–398 form a DNA-binding region, ETS; that stretch reads IQLWQFLLEL…HGKRYAYKFD (81 aa).

This sequence belongs to the ETS family. Identified in a IGF2BP1-dependent mRNP granule complex containing untranslated mRNAs. Interacts with SETDB1.

Its subcellular location is the nucleus. The protein resides in the cytoplasm. In terms of biological role, transcriptional regulator. May participate in transcriptional regulation through the recruitment of SETDB1 histone methyltransferase and subsequent modification of local chromatin structure. The protein is Transcriptional regulator ERG (Erg) of Mus musculus (Mouse).